A 470-amino-acid polypeptide reads, in one-letter code: Transcriptional activator PmfR (470 aa).

Forms oligomers in solution, probably homotetramers.

It participates in alkaloid degradation; nicotine degradation [regulation]. Transcriptional regulator involved in the activation of the purU-mabO-folD-nepA-nepB and mao-ORF55-nbr operons implicated in the nicotine catabolic pathway. The sequence GTTT-14 bp-AAAC seems to be the core binding site of the regulator upstream of the -35 promoter region of the operon. This chain is Transcriptional activator PmfR (pmfR), found in Paenarthrobacter nicotinovorans (Arthrobacter nicotinovorans).